Reading from the N-terminus, the 811-residue chain is DEAD-box ATP-dependent RNA helicase 48 (811 aa).

2 disordered regions span residues 1-32 and 93-138; these read MGGG…ERGL and DDGP…EPRL. Basic residues predominate over residues 15-29; sequence WQHKRMHEKLARHKE. 2 stretches are compositionally biased toward basic and acidic residues: residues 95–104 and 117–138; these read GPIHRADRPR and GDRR…EPRL. Residues 286 to 333 are a coiled coil; sequence RNCDMKKERRALKSYEEENNDLAGSFRELREEIKNREVLGAERRRYES. The Q motif signature appears at 342–370; sequence KRFEECGISPLTVKALTDAGYVQTTVVQE. In terms of domain architecture, Helicase ATP-binding spans 373 to 556; that stretch reads LPMCLEGKDV…QLVLKRDHVF (184 aa). 386-393 lines the ATP pocket; the sequence is AKTGTGKS. The DEAD box signature appears at 504–507; that stretch reads DEAD. One can recognise a Helicase C-terminal domain in the interval 570 to 740; that stretch reads KVEQLYLVMP…EMKRKVDGSI (171 aa).

Belongs to the DEAD box helicase family.

The catalysed reaction is ATP + H2O = ADP + phosphate + H(+). This chain is DEAD-box ATP-dependent RNA helicase 48, found in Oryza sativa subsp. japonica (Rice).